A 96-amino-acid polypeptide reads, in one-letter code: Large ribosomal subunit protein uL23 (96 aa).

This sequence belongs to the universal ribosomal protein uL23 family. In terms of assembly, part of the 50S ribosomal subunit. Contacts protein L29, and trigger factor when it is bound to the ribosome.

One of the early assembly proteins it binds 23S rRNA. One of the proteins that surrounds the polypeptide exit tunnel on the outside of the ribosome. Forms the main docking site for trigger factor binding to the ribosome. The chain is Large ribosomal subunit protein uL23 from Onion yellows phytoplasma (strain OY-M).